We begin with the raw amino-acid sequence, 525 residues long: Putative ankyrin repeat protein FPV228 (525 aa).

ANK repeat units lie at residues 39 to 71, 72 to 122, 123 to 152, 156 to 185, 190 to 226, 227 to 254, 258 to 287, 291 to 320, and 324 to 353; these read HPDNPLLEAVKLTNTDMIKTLLDYGICINTRDI, LGNT…ACNN, LNQTPLHLAAESNNTTLLKILLYNNAKVNI, YGNTCLHYAVRGRNIESIKLLLSYNVDVNI, YWYSALHEAVQIGDSKISRCIVSLLLCNKANVNTRCR, LNTTPIFYAINCIDTLKLLLENGADINA, NDNAVIHLATENRRYDIIKTLLDYGADVNM, RGKTPLYYATENYSYRNMKLLLDHGSNPNI, and IMNTPLFISIKCTCIENTKMLLDSGADINH.

The protein is Putative ankyrin repeat protein FPV228 of Fowlpox virus (strain NVSL) (FPV).